The chain runs to 554 residues: Chaperonin GroEL (554 aa).

Residues threonine 30–proline 33, lysine 51, aspartate 87–threonine 91, glycine 415, asparagine 479–alanine 481, and aspartate 495 each bind ATP.

It belongs to the chaperonin (HSP60) family. Forms a cylinder of 14 subunits composed of two heptameric rings stacked back-to-back. Interacts with the co-chaperonin GroES.

Its subcellular location is the cytoplasm. The enzyme catalyses ATP + H2O + a folded polypeptide = ADP + phosphate + an unfolded polypeptide.. Functionally, together with its co-chaperonin GroES, plays an essential role in assisting protein folding. The GroEL-GroES system forms a nano-cage that allows encapsulation of the non-native substrate proteins and provides a physical environment optimized to promote and accelerate protein folding. This Nitrosococcus oceani (strain ATCC 19707 / BCRC 17464 / JCM 30415 / NCIMB 11848 / C-107) protein is Chaperonin GroEL.